We begin with the raw amino-acid sequence, 504 residues long: Maturase K (504 aa).

It belongs to the intron maturase 2 family. MatK subfamily.

Its subcellular location is the plastid. It localises to the chloroplast. In terms of biological role, usually encoded in the trnK tRNA gene intron. Probably assists in splicing its own and other chloroplast group II introns. The chain is Maturase K from Impatiens capensis (Spotted jewelweed).